The primary structure comprises 350 residues: D-alanine--D-alanine ligase (350 aa).

The 209-residue stretch at Lys-138 to Gln-346 folds into the ATP-grasp domain. Glu-173 to Glu-228 is a binding site for ATP. Mg(2+) contacts are provided by Asp-299, Glu-313, and Asn-315.

This sequence belongs to the D-alanine--D-alanine ligase family. It depends on Mg(2+) as a cofactor. Requires Mn(2+) as cofactor.

It localises to the cytoplasm. The catalysed reaction is 2 D-alanine + ATP = D-alanyl-D-alanine + ADP + phosphate + H(+). Its pathway is cell wall biogenesis; peptidoglycan biosynthesis. Its function is as follows. Cell wall formation. In Synechococcus sp. (strain CC9605), this protein is D-alanine--D-alanine ligase.